A 157-amino-acid chain; its full sequence is UPF0756 membrane protein ABC2716 (157 aa).

The next 4 helical transmembrane spans lie at 8-28, 54-74, 84-104, and 117-137; these read FLLLLMAIALIAKNQSLIIAI, LGVTIITIAVLVPIATGDIGF, LYAWVALGSGIAVALVAASGI, and LVLGTIVAVSFLNGVAVGPLI.

The protein belongs to the UPF0756 family.

Its subcellular location is the cell membrane. This Shouchella clausii (strain KSM-K16) (Alkalihalobacillus clausii) protein is UPF0756 membrane protein ABC2716.